The sequence spans 72 residues: Translation initiation factor IF-1 (72 aa).

One can recognise an S1-like domain in the interval 1 to 72 (MAKEDVIEMQ…SKGRIVFRAR (72 aa)).

The protein belongs to the IF-1 family. Component of the 30S ribosomal translation pre-initiation complex which assembles on the 30S ribosome in the order IF-2 and IF-3, IF-1 and N-formylmethionyl-tRNA(fMet); mRNA recruitment can occur at any time during PIC assembly.

The protein localises to the cytoplasm. Its function is as follows. One of the essential components for the initiation of protein synthesis. Stabilizes the binding of IF-2 and IF-3 on the 30S subunit to which N-formylmethionyl-tRNA(fMet) subsequently binds. Helps modulate mRNA selection, yielding the 30S pre-initiation complex (PIC). Upon addition of the 50S ribosomal subunit IF-1, IF-2 and IF-3 are released leaving the mature 70S translation initiation complex. This is Translation initiation factor IF-1 from Photobacterium profundum (strain SS9).